The sequence spans 931 residues: Isoleucine--tRNA ligase (931 aa).

The 'HIGH' region motif lies at 58-68 (PYANGHLHCGH). An L-isoleucyl-5'-AMP-binding site is contributed by E559. Positions 600 to 604 (KLSKS) match the 'KMSKS' region motif. Position 603 (K603) interacts with ATP. C894, C897, C914, and C917 together coordinate Zn(2+).

Belongs to the class-I aminoacyl-tRNA synthetase family. IleS type 1 subfamily. As to quaternary structure, monomer. Zn(2+) is required as a cofactor.

Its subcellular location is the cytoplasm. It catalyses the reaction tRNA(Ile) + L-isoleucine + ATP = L-isoleucyl-tRNA(Ile) + AMP + diphosphate. In terms of biological role, catalyzes the attachment of isoleucine to tRNA(Ile). As IleRS can inadvertently accommodate and process structurally similar amino acids such as valine, to avoid such errors it has two additional distinct tRNA(Ile)-dependent editing activities. One activity is designated as 'pretransfer' editing and involves the hydrolysis of activated Val-AMP. The other activity is designated 'posttransfer' editing and involves deacylation of mischarged Val-tRNA(Ile). This is Isoleucine--tRNA ligase from Legionella pneumophila (strain Lens).